We begin with the raw amino-acid sequence, 279 residues long: Fatty acid elongase 2 (279 aa).

Helical transmembrane passes span 16 to 36 (LMLENVDVLGYLSLGYLALVW), 61 to 81 (AIIVWNLLLSAFSFFGMIVVV), 112 to 132 (FWIGMFVLSKAPELVDTMFLL), 138 to 158 (PPFLHWYHHVTVLIFSWHTYC), 164 to 184 (MVLFAAMNLTVHFIMYFYFAM), 196 to 216 (FAPFITMLQILQMVVGSLVTT), and 242 to 262 (MGVIMYMSYLYLFSEMFLNSY). The HxxHH motif signature appears at 142–146 (HWYHH). The active-site Nucleophile is the histidine 145.

The protein belongs to the ELO family.

It is found in the endoplasmic reticulum membrane. The enzyme catalyses an acyl-CoA + malonyl-CoA + H(+) = a 3-oxoacyl-CoA + CO2 + CoA. Its pathway is lipid metabolism; fatty acid biosynthesis. Involved in the synthesis of fatty acids. Elongates C10 fatty acids to C14. Required for the maintenance of the global lipidome profile in this parasite. This is Fatty acid elongase 2 from Trypanosoma cruzi (strain CL Brener).